A 92-amino-acid chain; its full sequence is Small ribosomal subunit protein uS19c (92 aa).

It belongs to the universal ribosomal protein uS19 family.

It is found in the plastid. It localises to the chloroplast. Protein S19 forms a complex with S13 that binds strongly to the 16S ribosomal RNA. In Amborella trichopoda, this protein is Small ribosomal subunit protein uS19c.